A 344-amino-acid chain; its full sequence is Ketol-acid reductoisomerase (NADP(+)) (344 aa).

The KARI N-terminal Rossmann domain maps to 2–181 (AKVLYEKDIQ…GAARAGVLET (180 aa)). NADP(+) contacts are provided by residues 25–28 (YGSQ), Arg48, Ser52, and 82–85 (DEMQ). His107 is a catalytic residue. NADP(+) is bound at residue Gly133. The 146-residue stretch at 182–327 (SFQEETETDL…RELRELMPFV (146 aa)) folds into the KARI C-terminal knotted domain. Mg(2+) contacts are provided by Asp190, Glu194, Glu226, and Glu230. Substrate is bound at residue Ser251.

It belongs to the ketol-acid reductoisomerase family. Mg(2+) serves as cofactor.

It carries out the reaction (2R)-2,3-dihydroxy-3-methylbutanoate + NADP(+) = (2S)-2-acetolactate + NADPH + H(+). The catalysed reaction is (2R,3R)-2,3-dihydroxy-3-methylpentanoate + NADP(+) = (S)-2-ethyl-2-hydroxy-3-oxobutanoate + NADPH + H(+). Its pathway is amino-acid biosynthesis; L-isoleucine biosynthesis; L-isoleucine from 2-oxobutanoate: step 2/4. It functions in the pathway amino-acid biosynthesis; L-valine biosynthesis; L-valine from pyruvate: step 2/4. Involved in the biosynthesis of branched-chain amino acids (BCAA). Catalyzes an alkyl-migration followed by a ketol-acid reduction of (S)-2-acetolactate (S2AL) to yield (R)-2,3-dihydroxy-isovalerate. In the isomerase reaction, S2AL is rearranged via a Mg-dependent methyl migration to produce 3-hydroxy-3-methyl-2-ketobutyrate (HMKB). In the reductase reaction, this 2-ketoacid undergoes a metal-dependent reduction by NADPH to yield (R)-2,3-dihydroxy-isovalerate. The protein is Ketol-acid reductoisomerase (NADP(+)) of Oceanobacillus iheyensis (strain DSM 14371 / CIP 107618 / JCM 11309 / KCTC 3954 / HTE831).